A 258-amino-acid chain; its full sequence is UPF0246 protein Pnec_1068 (258 aa).

Belongs to the UPF0246 family.

The chain is UPF0246 protein Pnec_1068 from Polynucleobacter necessarius subsp. necessarius (strain STIR1).